Reading from the N-terminus, the 361-residue chain is Probable dual-specificity RNA methyltransferase RlmN (361 aa).

The active-site Proton acceptor is Glu91. The region spanning 97-329 (QHYGLSVCVT…KKKGGNCVVR (233 aa)) is the Radical SAM core domain. An intrachain disulfide couples Cys104 to Cys340. Residues Cys111, Cys115, and Cys118 each contribute to the [4Fe-4S] cluster site. Residues 163-164 (GE), Ser195, 218-220 (SLH), and Asn296 each bind S-adenosyl-L-methionine. Catalysis depends on Cys340, which acts as the S-methylcysteine intermediate.

It belongs to the radical SAM superfamily. RlmN family. Requires [4Fe-4S] cluster as cofactor.

It localises to the cytoplasm. It carries out the reaction adenosine(2503) in 23S rRNA + 2 reduced [2Fe-2S]-[ferredoxin] + 2 S-adenosyl-L-methionine = 2-methyladenosine(2503) in 23S rRNA + 5'-deoxyadenosine + L-methionine + 2 oxidized [2Fe-2S]-[ferredoxin] + S-adenosyl-L-homocysteine. The catalysed reaction is adenosine(37) in tRNA + 2 reduced [2Fe-2S]-[ferredoxin] + 2 S-adenosyl-L-methionine = 2-methyladenosine(37) in tRNA + 5'-deoxyadenosine + L-methionine + 2 oxidized [2Fe-2S]-[ferredoxin] + S-adenosyl-L-homocysteine. In terms of biological role, specifically methylates position 2 of adenine 2503 in 23S rRNA and position 2 of adenine 37 in tRNAs. This chain is Probable dual-specificity RNA methyltransferase RlmN, found in Streptococcus pneumoniae serotype 2 (strain D39 / NCTC 7466).